The primary structure comprises 529 residues: Bifunctional purine biosynthesis protein PurH (529 aa).

An MGS-like domain is found at 1–148 (MQQRRPVRRA…KNHKDVAIVV (148 aa)).

Belongs to the PurH family.

It carries out the reaction (6R)-10-formyltetrahydrofolate + 5-amino-1-(5-phospho-beta-D-ribosyl)imidazole-4-carboxamide = 5-formamido-1-(5-phospho-D-ribosyl)imidazole-4-carboxamide + (6S)-5,6,7,8-tetrahydrofolate. The enzyme catalyses IMP + H2O = 5-formamido-1-(5-phospho-D-ribosyl)imidazole-4-carboxamide. It participates in purine metabolism; IMP biosynthesis via de novo pathway; 5-formamido-1-(5-phospho-D-ribosyl)imidazole-4-carboxamide from 5-amino-1-(5-phospho-D-ribosyl)imidazole-4-carboxamide (10-formyl THF route): step 1/1. The protein operates within purine metabolism; IMP biosynthesis via de novo pathway; IMP from 5-formamido-1-(5-phospho-D-ribosyl)imidazole-4-carboxamide: step 1/1. This chain is Bifunctional purine biosynthesis protein PurH, found in Salmonella dublin (strain CT_02021853).